We begin with the raw amino-acid sequence, 991 residues long: Regulator of telomere elongation helicase 1 homolog (991 aa).

The 313-residue stretch at 7-319 (NGIPVNFPFE…DDLVLLKEIL (313 aa)) folds into the Helicase ATP-binding domain. ATP is bound at residue 42–49 (SPTGTGKT). [4Fe-4S] cluster is bound by residues Cys-148, Cys-166, Cys-175, and Cys-211. Residues 254 to 257 (DEAH) carry the DEAH box motif. The disordered stretch occupies residues 812 to 833 (SMKVNPHSRSTKSAGDDAEAGG).

The protein belongs to the helicase family. RAD3/XPD subfamily.

The protein localises to the nucleus. The enzyme catalyses ATP + H2O = ADP + phosphate + H(+). Its function is as follows. A probable ATP-dependent DNA helicase implicated in DNA repair and the maintenance of genomic stability. Acts as an anti-recombinase to counteract toxic recombination and limit crossover during meiosis. Regulates meiotic recombination and crossover homeostasis by physically dissociating strand invasion events and thereby promotes noncrossover repair by meiotic synthesis dependent strand annealing (SDSA) as well as disassembly of D loop recombination intermediates. This chain is Regulator of telomere elongation helicase 1 homolog, found in Anopheles gambiae (African malaria mosquito).